We begin with the raw amino-acid sequence, 126 residues long: DNA-directed RNA polymerase subunit omega (126 aa).

It belongs to the RNA polymerase subunit omega family. In terms of assembly, the RNAP catalytic core consists of 2 alpha, 1 beta, 1 beta' and 1 omega subunit. When a sigma factor is associated with the core the holoenzyme is formed, which can initiate transcription.

The enzyme catalyses RNA(n) + a ribonucleoside 5'-triphosphate = RNA(n+1) + diphosphate. In terms of biological role, promotes RNA polymerase assembly. Latches the N- and C-terminal regions of the beta' subunit thereby facilitating its interaction with the beta and alpha subunits. The chain is DNA-directed RNA polymerase subunit omega from Rickettsia bellii (strain OSU 85-389).